Consider the following 1345-residue polypeptide: Vascular endothelial growth factor receptor 2 (1345 aa).

A signal peptide spans 1–19 (MESKALLAVALWFCVETRA). Residues 20–762 (ASVGLPGDFL…EGAQEKTNLE (743 aa)) lie on the Extracellular side of the membrane. 5 N-linked (GlcNAc...) asparagine glycosylation sites follow: asparagine 46, asparagine 98, asparagine 145, asparagine 160, and asparagine 247. 7 consecutive Ig-like C2-type domains span residues 46 to 111 (NTTL…RDVD), 143 to 209 (NKNK…INDE), 226 to 325 (YDVI…TFVR), 330 to 416 (PFIA…HMVS), 423 to 542 (PQIG…RVIS), 549 to 656 (PEIT…LVKQ), and 665 to 751 (PMIT…TLFI). An intrachain disulfide couples cysteine 53 to cysteine 105. A disulfide bridge links cysteine 152 with cysteine 202. A disulfide bond links cysteine 248 and cysteine 309. Asparagine 320, asparagine 376, asparagine 397, asparagine 509, asparagine 521, asparagine 578, asparagine 611, asparagine 617, asparagine 629, asparagine 673, asparagine 702, and asparagine 719 each carry an N-linked (GlcNAc...) asparagine glycan. Disulfide bonds link cysteine 447–cysteine 528 and cysteine 569–cysteine 640. Cysteines 686 and 735 form a disulfide. The helical transmembrane segment at 763-783 (VIILVGTAVIAMFFWLLLVIV) threads the bilayer. Residues 784–1345 (LRTVKRANEG…SGTTLRSPPV (562 aa)) lie on the Cytoplasmic side of the membrane. Phosphotyrosine is present on tyrosine 799. One can recognise a Protein kinase domain in the interval 832 to 1160 (LKLGKPLGRG…FSELVEHLGN (329 aa)). ATP is bound by residues 838–846 (LGRGAFGQV) and lysine 866. Tyrosine 949 carries the post-translational modification Phosphotyrosine; by autocatalysis. Phosphoserine occurs at positions 980 and 982. Residue tyrosine 994 is modified to Phosphotyrosine; by autocatalysis. The cysteines at positions 1022 and 1043 are disulfide-linked. Residue aspartate 1026 is the Proton acceptor of the active site. Tyrosine 1052, tyrosine 1057, tyrosine 1173, and tyrosine 1212 each carry phosphotyrosine; by autocatalysis. Residues serine 1229 and serine 1233 each carry the phosphoserine modification. The residue at position 1236 (threonine 1236) is a Phosphothreonine. The segment at 1272–1316 (DRNKLSPSFGGMMPSKSRESVASEGSNQTSGYQSGYHSDDTDTTV) is disordered. Over residues 1294-1307 (SEGSNQTSGYQSGY) the composition is skewed to polar residues. Tyrosine 1303, tyrosine 1307, and tyrosine 1317 each carry phosphotyrosine; by autocatalysis.

It belongs to the protein kinase superfamily. Tyr protein kinase family. CSF-1/PDGF receptor subfamily. In terms of assembly, homodimer in the presence of bound dimeric VEGFA, VEGFC or VEGFD ligands; monomeric in the absence of bound ligands. Can also form heterodimers with FLT1/VEGFR1 and KDR/VEGFR2. Interacts (tyrosine phosphorylated) with LFYN, NCK1, PLCG1. Interacts (tyrosine-phosphorylated active form preferentially) with DAB2IP (via C2 domain and active form preferentially); the interaction occurs at the late phase of VEGFA response and inhibits KDR/VEGFR2 activity. Interacts with SHBSH2D2A/TSAD, GRB2, MYOF, CBL and PDCD6. Interacts (via C-terminus domain) with ERN1 (via kinase domain); the interaction is facilitated in a XBP1 isoform 1- and vascular endothelial growth factor (VEGF)-dependent manner in endothelial cells. Interacts (via juxtamembrane region) with chaperone PDCL3 (via thioredoxin fold region); the interaction leads to increased KDR/VEGFR2 abundance through inhibition of its ubiquitination and degradation. Interacts (tyrosine phosphorylated) with CCDC88A/GIV (via SH2-like region); binding requires autophosphorylation of the KDR/VEGFR2 C-terminal region. Interacts with isoform 2 of BSG. Interacts with SLC31A1; this interaction is induced upon VEGFA stimulation leading to SLC31A1 and KDR subsequent co-internalization to early endosomes, thereby activating KDR downstream signaling in endothelial cells. Post-translationally, N-glycosylated. In terms of processing, ubiquitinated. Tyrosine phosphorylation of the receptor promotes its poly-ubiquitination, leading to its degradation via the proteasome or lysosomal proteases. Autophosphorylated on tyrosine residues upon ligand binding. Autophosphorylation occurs in trans, i.e. one subunit of the dimeric receptor phosphorylates tyrosine residues on the other subunit. Phosphorylation at Tyr-949 is important for interaction with SH2D2A/TSAD and VEGFA-mediated reorganization of the actin cytoskeleton. Phosphorylation at Tyr-1173 is important for interaction with PLCG1 and SHB. Phosphorylation at Tyr-1212 is important for interaction with NCK1 and FYN. Dephosphorylated by PTPRJ at Tyr-799, Tyr-949, Tyr-994, Tyr-1052, Tyr-1057, Tyr-1173 and Tyr-1212. Post-translationally, the inhibitory disulfide bond between Cys-1022 and Cys-1043 may serve as a specific molecular switch for H(2)S-induced modification that regulates KDR/VEGFR2 function. In terms of tissue distribution, expressed in endothelial cells (at protein level). Detected in embryonic endothelial cells, as well as hematopoietic stem and progenitor cells. Detected in vascular endothelium. Expressed at high levels in adult heart, lung, kidney, brain and skeletal muscle, but is also expressed at lower levels in most other adult tissues.

Its subcellular location is the cell junction. The protein localises to the endoplasmic reticulum. The protein resides in the cell membrane. It localises to the cytoplasm. It is found in the nucleus. Its subcellular location is the cytoplasmic vesicle. The protein localises to the early endosome. The protein resides in the secreted. The catalysed reaction is L-tyrosyl-[protein] + ATP = O-phospho-L-tyrosyl-[protein] + ADP + H(+). Its activity is regulated as follows. Present in an inactive conformation in the absence of bound ligand. Binding of VEGFA, VEGFC or VEGFD leads to dimerization and activation by autophosphorylation on tyrosine residues. May be regulated by hydrogen sulfide (H(2)S) levels via a sensitive intracellular disulfide bond. In terms of biological role, tyrosine-protein kinase that acts as a cell-surface receptor for VEGFA, VEGFC and VEGFD. Plays an essential role in the regulation of angiogenesis, vascular development, vascular permeability, and embryonic hematopoiesis. Promotes proliferation, survival, migration and differentiation of endothelial cells. Promotes reorganization of the actin cytoskeleton. Isoforms lacking a transmembrane domain, such as isoform 2, may function as decoy receptors for VEGFA, VEGFC and/or VEGFD. Isoform 2 plays an important role as a negative regulator of VEGFA- and VEGFC-mediated lymphangiogenesis by limiting the amount of free VEGFA and/or VEGFC and by preventing their binding to FLT4. Modulates FLT1 and FLT4 signaling by forming heterodimers. Binding of vascular growth factors to isoform 1 leads to the activation of several signaling cascades. Activation of PLCG1 leads to the production of the cellular signaling molecules diacylglycerol and inositol 1,4,5-trisphosphate and the activation of protein kinase C. Mediates activation of MAPK1/ERK2, MAPK3/ERK1 and the MAP kinase signaling pathway, as well as of the AKT1 signaling pathway. Mediates phosphorylation of PIK3R1, the regulatory subunit of phosphatidylinositol 3-kinase, reorganization of the actin cytoskeleton and activation of PTK2/FAK1. Required for VEGFA-mediated induction of NOS2 and NOS3, leading to the production of the signaling molecule nitric oxide (NO) by endothelial cells. Phosphorylates PLCG1. Promotes phosphorylation of FYN, NCK1, NOS3, PIK3R1, PTK2/FAK1 and SRC. The chain is Vascular endothelial growth factor receptor 2 from Mus musculus (Mouse).